Consider the following 210-residue polypeptide: Adenylate kinase (210 aa).

ATP is bound at residue 10–15; sequence GSGKGT. The segment at 30–54 is NMP; that stretch reads SCGDILRKQNKCCDINKLIKKGELI. Residues Arg36, 52–54, 80–83, and Gln87 contribute to the AMP site; these read ELI and GFPR. Residues 117-154 are LID; sequence GRIIDKVSGEIYHLKFNPPKFITEKSNKNKILVRRLDD. Residues Arg118 and 127–128 each bind ATP; that span reads IY. Positions 151 and 162 each coordinate AMP. Residue Phe195 coordinates ATP.

The protein belongs to the adenylate kinase family. In terms of assembly, monomer.

It is found in the cytoplasm. It catalyses the reaction AMP + ATP = 2 ADP. Its pathway is purine metabolism; AMP biosynthesis via salvage pathway; AMP from ADP: step 1/1. Functionally, catalyzes the reversible transfer of the terminal phosphate group between ATP and AMP. Plays an important role in cellular energy homeostasis and in adenine nucleotide metabolism. This chain is Adenylate kinase, found in Wigglesworthia glossinidia brevipalpis.